A 174-amino-acid polypeptide reads, in one-letter code: Peptide methionine sulfoxide reductase MsrA (174 aa).

Residue C11 is part of the active site.

This sequence belongs to the MsrA Met sulfoxide reductase family.

The enzyme catalyses L-methionyl-[protein] + [thioredoxin]-disulfide + H2O = L-methionyl-(S)-S-oxide-[protein] + [thioredoxin]-dithiol. It catalyses the reaction [thioredoxin]-disulfide + L-methionine + H2O = L-methionine (S)-S-oxide + [thioredoxin]-dithiol. Functionally, has an important function as a repair enzyme for proteins that have been inactivated by oxidation. Catalyzes the reversible oxidation-reduction of methionine sulfoxide in proteins to methionine. This Nitratiruptor sp. (strain SB155-2) protein is Peptide methionine sulfoxide reductase MsrA.